The following is a 633-amino-acid chain: Probable potassium transport system protein Kup (633 aa).

The next 12 helical transmembrane spans lie at 21-41 (LAVG…LYAF), 61-81 (LVSL…VLFL), 107-127 (TAVL…DAMI), 145-165 (PTLS…LFAI), 176-196 (FFGP…IMHI), 219-239 (GFLG…AEAL), 255-275 (WFVL…ALVL), 293-313 (ALLP…QAVI), 345-365 (IFLP…VLSF), 371-391 (LATA…IMAF), 402-422 (LPMA…FLGA), and 427-447 (IHDG…IMWT).

Belongs to the HAK/KUP transporter (TC 2.A.72) family.

Its subcellular location is the cell inner membrane. It catalyses the reaction K(+)(in) + H(+)(in) = K(+)(out) + H(+)(out). Its function is as follows. Transport of potassium into the cell. Likely operates as a K(+):H(+) symporter. In Rhizobium rhizogenes (strain K84 / ATCC BAA-868) (Agrobacterium radiobacter), this protein is Probable potassium transport system protein Kup.